Here is a 1416-residue protein sequence, read N- to C-terminus: DNA-directed RNA polymerase subunit beta' (1416 aa).

Cysteine 71, cysteine 73, cysteine 86, and cysteine 89 together coordinate Zn(2+). Positions 461, 463, and 465 each coordinate Mg(2+). Zn(2+) contacts are provided by cysteine 815, cysteine 889, cysteine 896, and cysteine 899.

The protein belongs to the RNA polymerase beta' chain family. As to quaternary structure, the RNAP catalytic core consists of 2 alpha, 1 beta, 1 beta' and 1 omega subunit. When a sigma factor is associated with the core the holoenzyme is formed, which can initiate transcription. The cofactor is Mg(2+). Zn(2+) is required as a cofactor.

The catalysed reaction is RNA(n) + a ribonucleoside 5'-triphosphate = RNA(n+1) + diphosphate. Functionally, DNA-dependent RNA polymerase catalyzes the transcription of DNA into RNA using the four ribonucleoside triphosphates as substrates. This chain is DNA-directed RNA polymerase subunit beta', found in Haemophilus influenzae (strain PittEE).